Consider the following 309-residue polypeptide: Probable manganese-dependent inorganic pyrophosphatase (309 aa).

Mn(2+)-binding residues include H9, D13, D15, D75, H97, and D149.

This sequence belongs to the PPase class C family. It depends on Mn(2+) as a cofactor.

It localises to the cytoplasm. It carries out the reaction diphosphate + H2O = 2 phosphate + H(+). This is Probable manganese-dependent inorganic pyrophosphatase from Staphylococcus haemolyticus (strain JCSC1435).